Consider the following 900-residue polypeptide: DNA mismatch repair protein MutS (900 aa).

Positions 1-88 (MPGPSDDPTE…PAWAHHSQVD (88 aa)) are disordered. Basic and acidic residues predominate over residues 56 to 68 (APADHNAADHDSN). 714-721 (GPNASGKS) is an ATP binding site.

Belongs to the DNA mismatch repair MutS family.

This protein is involved in the repair of mismatches in DNA. It is possible that it carries out the mismatch recognition step. This protein has a weak ATPase activity. The chain is DNA mismatch repair protein MutS from Parasynechococcus marenigrum (strain WH8102).